The following is a 406-amino-acid chain: Endoplasmic reticulum resident protein 44 (406 aa).

The first 29 residues, 1–29 (MHPAVFLSLPDLRCSLLLLVTWVFTPVTT), serve as a signal peptide directing secretion. The Thioredoxin domain occupies 30–138 (EITSLDTENI…VKALADYIRQ (109 aa)). 2 disulfide bridges follow: Cys-189–Cys-241 and Cys-301–Cys-318. Positions 236–285 (WIQDKCVPLVREITFENGEELTEEGLPFLILFHMKEDTESLEIFQNEVAR) are interaction with ITPR1. The interval 360–387 (FHHGPDPTDTAPGEQAQDVASSPPESSF) is disordered. The span at 377–387 (DVASSPPESSF) shows a compositional bias: polar residues. The Prevents secretion from ER signature appears at 403 to 406 (RDEL).

As to quaternary structure, forms mixed disulfides with both ERO1A and ERO1B and cargo folding intermediates; the interactions with ERO1A and ERO1B result in their retention in the endoplasmic reticulum. Directly interacts with ITPR1 in a pH-, redox state- and calcium-dependent manner, but not with ITPR2 or ITPR3. The strength of this interaction inversely correlates with calcium concentration.

The protein resides in the endoplasmic reticulum lumen. Its function is as follows. Mediates thiol-dependent retention in the early secretory pathway, forming mixed disulfides with substrate proteins through its conserved CRFS motif. Inhibits the calcium channel activity of ITPR1. May have a role in the control of oxidative protein folding in the endoplasmic reticulum. Required to retain ERO1A and ERO1B in the endoplasmic reticulum. The protein is Endoplasmic reticulum resident protein 44 (ERP44) of Homo sapiens (Human).